Consider the following 366-residue polypeptide: MLIWLVELADHFQFFNLFRYITFRTGAALFTSALIVFLFGPAIISSLRIRQGKGQPIRADGPQTHFKKAGTPTMGGLMILAGIVGSALLWADLSSIYVVSTLLVTLGFGAIGFYDDYLKVTKQSDKGFSGKARLGIEFVIAAIAVFFMMQAAQSAGSAGSTFGSSVTFPFFKDLMLNLGYFFVLFGGFVIVGAGNAVNLTDGLDGLAIVPVMIASAAFGLIAYLAGNAVFANYLQIHFVPGTGELAVILGAVIGAGLGFLWFNAPPAAIFMGDTGSLALGGLIGTVAVATKHEIVMVIIGGLFVIETLSVIIQVFWFKRTGRRVFLMAPIHHHFEKKGWTESQVVIRFWIIAVILAMVGLSTLKLR.

The next 10 helical transmembrane spans lie at 27–47 (AALF…ISSL), 71–91 (TPTM…LLWA), 93–113 (LSSI…AIGF), 134–154 (LGIE…AAQS), 174–194 (LMLN…VGAG), 205–225 (GLAI…AYLA), 245–265 (LAVI…FNAP), 268–288 (AIFM…TVAV), 297–317 (VIIG…VFWF), and 343–363 (QVVI…LSTL).

This sequence belongs to the glycosyltransferase 4 family. MraY subfamily. The cofactor is Mg(2+).

It localises to the cell inner membrane. The enzyme catalyses UDP-N-acetyl-alpha-D-muramoyl-L-alanyl-gamma-D-glutamyl-meso-2,6-diaminopimeloyl-D-alanyl-D-alanine + di-trans,octa-cis-undecaprenyl phosphate = di-trans,octa-cis-undecaprenyl diphospho-N-acetyl-alpha-D-muramoyl-L-alanyl-D-glutamyl-meso-2,6-diaminopimeloyl-D-alanyl-D-alanine + UMP. It functions in the pathway cell wall biogenesis; peptidoglycan biosynthesis. Catalyzes the initial step of the lipid cycle reactions in the biosynthesis of the cell wall peptidoglycan: transfers peptidoglycan precursor phospho-MurNAc-pentapeptide from UDP-MurNAc-pentapeptide onto the lipid carrier undecaprenyl phosphate, yielding undecaprenyl-pyrophosphoryl-MurNAc-pentapeptide, known as lipid I. This is Phospho-N-acetylmuramoyl-pentapeptide-transferase from Sinorhizobium fredii (strain NBRC 101917 / NGR234).